The chain runs to 341 residues: Phosphate acyltransferase (341 aa).

This sequence belongs to the PlsX family. Homodimer. Probably interacts with PlsY.

The protein localises to the cytoplasm. The enzyme catalyses a fatty acyl-[ACP] + phosphate = an acyl phosphate + holo-[ACP]. The protein operates within lipid metabolism; phospholipid metabolism. Functionally, catalyzes the reversible formation of acyl-phosphate (acyl-PO(4)) from acyl-[acyl-carrier-protein] (acyl-ACP). This enzyme utilizes acyl-ACP as fatty acyl donor, but not acyl-CoA. This chain is Phosphate acyltransferase, found in Aliivibrio salmonicida (strain LFI1238) (Vibrio salmonicida (strain LFI1238)).